The following is a 494-amino-acid chain: Fumigaclavine B O-acetyltransferase easN (494 aa).

The protein belongs to the fumigaclavine B O-acetyltransferase family. Monomer.

It carries out the reaction fumigaclavine B + acetyl-CoA = fumigaclavine A + CoA. The protein operates within alkaloid biosynthesis; ergot alkaloid biosynthesis. In terms of biological role, fumigaclavine B O-acetyltransferase; part of the gene cluster that mediates the biosynthesis of fumiclavanine C, a fungal ergot alkaloid. DmaW catalyzes the first step of ergot alkaloid biosynthesis by condensing dimethylallyl diphosphate (DMAP) and tryptophan to form 4-dimethylallyl-L-tryptophan. The second step is catalyzed by the methyltransferase easF that methylates 4-dimethylallyl-L-tryptophan in the presence of S-adenosyl-L-methionine, resulting in the formation of 4-dimethylallyl-L-abrine. The catalase easC and the FAD-dependent oxidoreductase easE then transform 4-dimethylallyl-L-abrine to chanoclavine-I which is further oxidized by EasD in the presence of NAD(+), resulting in the formation of chanoclavine-I aldehyde. EasA reduces chanoclavine-I aldehyde to dihydrochanoclavine-I aldehyde that spontaneously dehydrates to form 6,8-dimethyl-6,7-didehydroergoline. EasG then catalyzes the reduction of 6,8-dimethyl-6,7-didehydroergoline to form festuclavine. Hydrolysis of festuclavine by easM then leads to the formation of fumigaclavine B which is in turn acetylated by easN to fumigaclavine A. Finally, easL catalyzes the conversion of fumigaclavine A into fumigaclavine C by attaching a dimethylallyl moiety to C-2 of the indole nucleus. This chain is Fumigaclavine B O-acetyltransferase easN, found in Aspergillus fumigatus (strain ATCC MYA-4609 / CBS 101355 / FGSC A1100 / Af293) (Neosartorya fumigata).